The sequence spans 129 residues: uncharacterized protein (129 aa).

The signal sequence occupies residues 1 to 24; sequence MAFGWHSMHGSIIWFLQIAQLSTA. The next 2 helical transmembrane spans lie at 38–58 and 95–115; these read ISNL…CAIF and IAHI…FTPL.

The protein resides in the membrane. This is an uncharacterized protein from Saccharomyces cerevisiae (strain ATCC 204508 / S288c) (Baker's yeast).